The chain runs to 330 residues: Aspartate--ammonia ligase (330 aa).

This sequence belongs to the class-II aminoacyl-tRNA synthetase family. AsnA subfamily.

The protein localises to the cytoplasm. The catalysed reaction is L-aspartate + NH4(+) + ATP = L-asparagine + AMP + diphosphate + H(+). It participates in amino-acid biosynthesis; L-asparagine biosynthesis; L-asparagine from L-aspartate (ammonia route): step 1/1. The sequence is that of Aspartate--ammonia ligase from Salmonella paratyphi A (strain ATCC 9150 / SARB42).